A 334-amino-acid chain; its full sequence is Trans-1,2-dihydrobenzene-1,2-diol dehydrogenase (334 aa).

The protein belongs to the Gfo/Idh/MocA family. In terms of assembly, homodimer. As to expression, kidney.

It catalyses the reaction (1R,2R)-1,2-dihydrobenzene-1,2-diol + NADP(+) = catechol + NADPH + H(+). It carries out the reaction D-xylose + NADP(+) = D-xylono-1,5-lactone + NADPH + H(+). The polypeptide is Trans-1,2-dihydrobenzene-1,2-diol dehydrogenase (DHDH) (Macaca fascicularis (Crab-eating macaque)).